A 227-amino-acid chain; its full sequence is 7-cyano-7-deazaguanine synthase (227 aa).

7-17 (VSGGMDSLVAT) contacts ATP. Zn(2+) contacts are provided by Cys187, Cys195, Cys198, and Cys201.

It belongs to the QueC family. It depends on Zn(2+) as a cofactor.

The enzyme catalyses 7-carboxy-7-deazaguanine + NH4(+) + ATP = 7-cyano-7-deazaguanine + ADP + phosphate + H2O + H(+). Its pathway is purine metabolism; 7-cyano-7-deazaguanine biosynthesis. Functionally, catalyzes the ATP-dependent conversion of 7-carboxy-7-deazaguanine (CDG) to 7-cyano-7-deazaguanine (preQ(0)). The chain is 7-cyano-7-deazaguanine synthase from Chlorobaculum parvum (strain DSM 263 / NCIMB 8327) (Chlorobium vibrioforme subsp. thiosulfatophilum).